The primary structure comprises 323 residues: Olfactory receptor 4K5 (323 aa).

At 1–25 (MDKSNSSVVSEFVLLGLCSSQKLQL) the chain is on the extracellular side. Residue N5 is glycosylated (N-linked (GlcNAc...) asparagine). A helical transmembrane segment spans residues 26–49 (FYFCFFSVLYTVIVLGNLLIILTV). Topologically, residues 50–57 (TSDTSLHS) are cytoplasmic. The helical transmembrane segment at 58–79 (PMYFLLGNLSFVDICQASFATP) threads the bilayer. Residues 80-100 (KMIADFLSAHETISFSGCIAQ) lie on the Extracellular side of the membrane. The cysteines at positions 97 and 189 are disulfide-linked. A helical membrane pass occupies residues 101-120 (IFFIHLFTGGEMVLLVSMAY). At 121–139 (DRYVAICKPLYYVVIMSRR) the chain is on the cytoplasmic side. A helical membrane pass occupies residues 140–158 (TCTVLVMISWAVSLVHTLS). At 159-195 (QLSFTVNLPFCGPNVVDSFFCDLPRVTKLACLDSYII) the chain is on the extracellular side. Residues 196 to 219 (EILIVVNSGILSLSTFSLLVSSYI) form a helical membrane-spanning segment. The Cytoplasmic portion of the chain corresponds to 220 to 235 (IILVTVWLKSSAAMAK). A helical transmembrane segment spans residues 236-258 (AFSTLASHIAVVILFFGPCIFIY). Residues 259–269 (VWPFTISPLDK) lie on the Extracellular side of the membrane. Residues 270–289 (FLAIFYTVFTPVLNPIIYTL) form a helical membrane-spanning segment. Residues 290–323 (RNRDMKAAVRKIVNHYLRPRRISEMSLVVRTSFH) are Cytoplasmic-facing.

The protein belongs to the G-protein coupled receptor 1 family.

The protein resides in the cell membrane. Functionally, odorant receptor. The protein is Olfactory receptor 4K5 (OR4K5) of Homo sapiens (Human).